Here is a 369-residue protein sequence, read N- to C-terminus: MELATTGKVNEVLFMNRGEGESSYAQNSSFTQQVASMATLALENAVETLFSKDFHLQALNATDLGCAAGPNTFAVISTIKRMMEKKCRELNCQTLELQVYLNDLFGNDFNTLFKGLSSEVIGNKCEEVPCYVMGVPGSFHGRLFPRNSLHLVHSSYSVHWLTQAPKGLTNREGLALNKGKIYISKTSPPIVREAYLSQFHEDFTMFLNARSQEVVPNGCMVLILRGRQSSDPSDMQSCFTWELLAIAIAELVSQGLIDEDKLDTFNIPCYFPSLEEVKDIVERDGSFTIDHMEGFELDSLQMQENDKWVRGENFTKVVRAFTEPIISNQFGHEIMDKLYDKFTHIVVSDLEAKLPKTTSIILVLSKIDG.

Tyr24 contacts S-adenosyl-L-homocysteine. Caffeine is bound at residue Thr31. S-adenosyl-L-homocysteine contacts are provided by Cys66, Asn71, Asp103, Leu104, Ser138, and Phe139. Caffeine contacts are provided by Tyr156, His159, and Trp160. Asn177 provides a ligand contact to Mg(2+). Position 225 (Arg225) interacts with caffeine. Mg(2+) is bound by residues Asp263, Phe265, and Asn266. Residue Phe321 participates in caffeine binding.

Belongs to the methyltransferase superfamily. Type-7 methyltransferase family. Requires Mg(2+) as cofactor.

It carries out the reaction theobromine + S-adenosyl-L-methionine = caffeine + S-adenosyl-L-homocysteine + H(+). The enzyme catalyses 7-methylxanthine + S-adenosyl-L-methionine = theobromine + S-adenosyl-L-homocysteine + H(+). It functions in the pathway alkaloid biosynthesis. In terms of biological role, involved in the biosynthesis of caffeine. Catalyzes the conversion of 7-methylxanthine (7mX) to theobromine and of theobromine to caffeine. The sequence is that of Caffeine synthase 1 from Camellia crassicolumna (Evergreen tea).